We begin with the raw amino-acid sequence, 1092 residues long: Probable cellulose synthase A catalytic subunit 5 [UDP-forming] (1092 aa).

At 1–279 (MEASAGLVAG…SSSLVNPYRM (279 aa)) the chain is on the cytoplasmic side. 8 residues coordinate Zn(2+): C39, C42, C58, C61, C66, C69, C81, and C84. An RING-type; degenerate zinc finger spans residues 39 to 85 (CQICGDDVGLTPDGEPFVACNECAFPVCRDCYEYERREGTQNCPQCK). A helical transmembrane segment spans residues 280-300 (IIIIRLVVLGFFFHYRVMHPV). Over 301-302 (PD) the chain is Extracellular. The chain crosses the membrane as a helical span at residues 303 to 323 (AFALWLISVICEIWFAMSWIL). The Cytoplasmic portion of the chain corresponds to 324–868 (DQFPKWFPIE…CLERFSYINS (545 aa)). Residues S362, K368, E369, and D398 each contribute to the UDP-alpha-D-glucose site. D398 is a catalytic residue. The stretch at 450-479 (NFVRERRAMKREYEEFKVRINALVAKAQKV) forms a coiled coil. K539 is a UDP-alpha-D-glucose binding site. K540 and D564 together coordinate Mn(2+). D792 is a catalytic residue. A helical transmembrane segment spans residues 869–889 (IVYPWTSIPLLAYCTLPAICL). The Extracellular segment spans residues 890–901 (LTGKFITPELTN). A helical transmembrane segment spans residues 902-922 (IASLWFMSLFICIFATGILEM). Residues 923-938 (RWSGVGIDDWWRNEQF) are Cytoplasmic-facing. The chain crosses the membrane as a helical span at residues 939–959 (WVIGGVSSHLFAVFQGLLKVI). At 960 to 987 (AGIDTSFTVTSKGGDDEEFSELYTFKWT) the chain is on the extracellular side. The helical transmembrane segment at 988–1008 (TLLIPPTTLLLLNFIGVVAGV) threads the bilayer. Over 1009–1019 (SNAINNGYESW) the chain is Cytoplasmic. The chain crosses the membrane as a helical span at residues 1020–1040 (GPLFGKLFFAFWVIVHLYPFL). The Extracellular segment spans residues 1041–1049 (KGLVGRQNR). A helical membrane pass occupies residues 1050 to 1070 (TPTIVIVWSILLASIFSLLWV). The Cytoplasmic portion of the chain corresponds to 1071-1092 (RIDPFLAKNDGPLLEECGLDCN).

The protein belongs to the glycosyltransferase 2 family. Plant cellulose synthase subfamily. Mn(2+) is required as a cofactor. It depends on Zn(2+) as a cofactor.

Its subcellular location is the cell membrane. It catalyses the reaction [(1-&gt;4)-beta-D-glucosyl](n) + UDP-alpha-D-glucose = [(1-&gt;4)-beta-D-glucosyl](n+1) + UDP + H(+). It participates in glycan metabolism; plant cellulose biosynthesis. Its function is as follows. Probable catalytic subunit of cellulose synthase terminal complexes ('rosettes'), required for beta-1,4-glucan microfibril crystallization, a major mechanism of the cell wall formation. This Oryza sativa subsp. indica (Rice) protein is Probable cellulose synthase A catalytic subunit 5 [UDP-forming] (CESA5).